Reading from the N-terminus, the 273-residue chain is Undecaprenyl-diphosphatase (273 aa).

The next 6 helical transmembrane spans lie at 46–63 (LFEV…CWEY), 83–103 (FVLN…LAGK), 109–129 (LFNS…ILWV), 184–204 (ATEF…AYDL), 218–238 (AFGI…RGLL), and 249–269 (FAWY…YGLV).

Belongs to the UppP family.

The protein resides in the cell inner membrane. The catalysed reaction is di-trans,octa-cis-undecaprenyl diphosphate + H2O = di-trans,octa-cis-undecaprenyl phosphate + phosphate + H(+). Functionally, catalyzes the dephosphorylation of undecaprenyl diphosphate (UPP). Confers resistance to bacitracin. In Methylococcus capsulatus (strain ATCC 33009 / NCIMB 11132 / Bath), this protein is Undecaprenyl-diphosphatase.